Here is a 274-residue protein sequence, read N- to C-terminus: Large ribosomal subunit protein uL2 (274 aa).

The interval 224-274 is disordered; it reads AMNPVDHPHGGGEGRTGEGQVPVSPWNTMTKGYRTRSNKRTQTFIVSRRKK. The span at 229-239 shows a compositional bias: basic and acidic residues; that stretch reads DHPHGGGEGRT.

It belongs to the universal ribosomal protein uL2 family. Part of the 50S ribosomal subunit. Forms a bridge to the 30S subunit in the 70S ribosome.

Its function is as follows. One of the primary rRNA binding proteins. Required for association of the 30S and 50S subunits to form the 70S ribosome, for tRNA binding and peptide bond formation. It has been suggested to have peptidyltransferase activity; this is somewhat controversial. Makes several contacts with the 16S rRNA in the 70S ribosome. The sequence is that of Large ribosomal subunit protein uL2 from Methylibium petroleiphilum (strain ATCC BAA-1232 / LMG 22953 / PM1).